A 614-amino-acid polypeptide reads, in one-letter code: Putative amino acid transporter AAT1 (614 aa).

Helical transmembrane passes span 184 to 216 (VLFLCTAIGVGLLSIPYVFSELGIILSIILILL), 222 to 243 (YITTNILCMSSLEHNIFVYGNL), 255 to 275 (LIDFGLTFSFLSGYVLVLILV), 295 to 311 (RIFITIVICLLVLPLTF), 318 to 340 (INCFLVFSLFSITLTVLAVGYQS), 360 to 380 (HFFKCFNILLFSFSQQSNACF), 401 to 417 (ILIQVIFYTLFGLLGYL), 437 to 459 (SILLCKFFLCISFFFSIPLNFIA), 531 to 547 (CAAIFVTCLCAFVEFNV), 553 to 575 (FIGIFGGFTSSIISCILPNLIYY), and 587 to 613 (RYATLALLCFFSVIGLISSIVTAFIII).

Belongs to the amino acid/polyamine transporter 2 family.

It localises to the vacuole membrane. Its function is as follows. Putative amino acid transporter. Involved in maintaining the osmotic homeostasis of the digestive vacuole. Important for the timely development and growth of the asexual-stage parasites and male gametocyte maturation. This chain is Putative amino acid transporter AAT1, found in Plasmodium berghei (strain Anka).